We begin with the raw amino-acid sequence, 574 residues long: Methionine--tRNA ligase (574 aa).

The 'HIGH' region motif lies at 11–21; the sequence is PYINGIKHLGN. Zn(2+) is bound by residues cysteine 143, cysteine 146, cysteine 156, and cysteine 159. The 'KMSKS' region signature appears at 345–349; that stretch reads KFSTS. Threonine 348 lines the ATP pocket.

This sequence belongs to the class-I aminoacyl-tRNA synthetase family. MetG type 1 subfamily. As to quaternary structure, monomer. It depends on Zn(2+) as a cofactor.

Its subcellular location is the cytoplasm. The enzyme catalyses tRNA(Met) + L-methionine + ATP = L-methionyl-tRNA(Met) + AMP + diphosphate. Functionally, is required not only for elongation of protein synthesis but also for the initiation of all mRNA translation through initiator tRNA(fMet) aminoacylation. The polypeptide is Methionine--tRNA ligase (Streptomyces avermitilis (strain ATCC 31267 / DSM 46492 / JCM 5070 / NBRC 14893 / NCIMB 12804 / NRRL 8165 / MA-4680)).